A 628-amino-acid polypeptide reads, in one-letter code: Phosphomethylpyrimidine synthase (628 aa).

The tract at residues 1–22 (MSKQEKTINLSESAQVDQQSVQ) is disordered. Polar residues predominate over residues 7-22 (TINLSESAQVDQQSVQ). Substrate contacts are provided by residues Asn-232, Met-261, Tyr-290, His-326, 346 to 348 (SRG), 387 to 390 (DGLR), and Glu-426. His-430 is a Zn(2+) binding site. Position 453 (Tyr-453) interacts with substrate. Zn(2+) is bound at residue His-494. Positions 574, 577, and 582 each coordinate [4Fe-4S] cluster.

The protein belongs to the ThiC family. Homodimer. It depends on [4Fe-4S] cluster as a cofactor.

The enzyme catalyses 5-amino-1-(5-phospho-beta-D-ribosyl)imidazole + S-adenosyl-L-methionine = 4-amino-2-methyl-5-(phosphooxymethyl)pyrimidine + CO + 5'-deoxyadenosine + formate + L-methionine + 3 H(+). It functions in the pathway cofactor biosynthesis; thiamine diphosphate biosynthesis. Catalyzes the synthesis of the hydroxymethylpyrimidine phosphate (HMP-P) moiety of thiamine from aminoimidazole ribotide (AIR) in a radical S-adenosyl-L-methionine (SAM)-dependent reaction. The polypeptide is Phosphomethylpyrimidine synthase (Pseudomonas putida (strain W619)).